The primary structure comprises 523 residues: Bifunctional purine biosynthesis protein PurH (523 aa).

The MGS-like domain maps to 4–152; the sequence is DHIRRPIRRA…KNHPSVAVVT (149 aa).

It belongs to the PurH family.

The catalysed reaction is (6R)-10-formyltetrahydrofolate + 5-amino-1-(5-phospho-beta-D-ribosyl)imidazole-4-carboxamide = 5-formamido-1-(5-phospho-D-ribosyl)imidazole-4-carboxamide + (6S)-5,6,7,8-tetrahydrofolate. It carries out the reaction IMP + H2O = 5-formamido-1-(5-phospho-D-ribosyl)imidazole-4-carboxamide. It participates in purine metabolism; IMP biosynthesis via de novo pathway; 5-formamido-1-(5-phospho-D-ribosyl)imidazole-4-carboxamide from 5-amino-1-(5-phospho-D-ribosyl)imidazole-4-carboxamide (10-formyl THF route): step 1/1. It functions in the pathway purine metabolism; IMP biosynthesis via de novo pathway; IMP from 5-formamido-1-(5-phospho-D-ribosyl)imidazole-4-carboxamide: step 1/1. The protein is Bifunctional purine biosynthesis protein PurH of Mycobacterium ulcerans (strain Agy99).